Here is a 120-residue protein sequence, read N- to C-terminus: Peptidyl-tRNA hydrolase (120 aa).

The protein belongs to the PTH2 family. As to quaternary structure, homodimer.

The protein localises to the cytoplasm. It carries out the reaction an N-acyl-L-alpha-aminoacyl-tRNA + H2O = an N-acyl-L-amino acid + a tRNA + H(+). Its function is as follows. The natural substrate for this enzyme may be peptidyl-tRNAs which drop off the ribosome during protein synthesis. The sequence is that of Peptidyl-tRNA hydrolase from Saccharolobus solfataricus (strain ATCC 35092 / DSM 1617 / JCM 11322 / P2) (Sulfolobus solfataricus).